The primary structure comprises 234 residues: MVKSWLRMSKKMEAGTLLMLLMSNILLWENVASVPRHASGAGRGEMSLHGLLDHAIILAHNVTELIAEMNSVFLEDVLYKPGRWFPERDLTACHRSPFTIAVSKEGTQQRLGVFLVKEMIGMLETWTFSLYHIANEMSHMEEPPDEIISRAKNIEEKIKELMDVLKGILNKIQPGSPQNERFPMWNELAYLRSPDEERRHFAFTNLFQCLLQDSRKFDSKVRLLKCRLIYNRDC.

The signal sequence occupies residues 1–33 (MVKSWLRMSKKMEAGTLLMLLMSNILLWENVAS). N-linked (GlcNAc...) asparagine glycosylation occurs at Asn-61. 2 disulfides stabilise this stretch: Cys-93–Cys-209 and Cys-226–Cys-234.

The protein belongs to the somatotropin/prolactin family.

It localises to the secreted. This chain is Prolactin-6A1 (Prl6a1), found in Rattus norvegicus (Rat).